The primary structure comprises 243 residues: Venom nerve growth factor 2 (243 aa).

The N-terminal stretch at 1-18 (MSMLCYTLIIAFLIGIWA) is a signal peptide. A propeptide spanning residues 19–125 (APKSEDNVPL…TLNRNIRAKR (107 aa)) is cleaved from the precursor. The span at 47 to 66 (GLKTSRNTDQRHPAPKKAED) shows a compositional bias: basic and acidic residues. Positions 47–67 (GLKTSRNTDQRHPAPKKAEDQ) are disordered. Disulfide bonds link Cys-139–Cys-204 and Cys-192–Cys-234. Asn-148 is a glycosylation site (N-linked (GlcNAc...) asparagine).

Belongs to the NGF-beta family. In terms of assembly, homodimer; non-covalently linked. Expressed by the venom gland.

The protein localises to the secreted. Its function is as follows. Nerve growth factor is important for the development and maintenance of the sympathetic and sensory nervous systems. It stimulates division and differentiation of sympathetic and embryonic sensory neurons as well as basal forebrain cholinergic neurons in the brain. Its relevance in the snake venom is not clear. However, it has been shown to inhibit metalloproteinase-dependent proteolysis of platelet glycoprotein Ib alpha, suggesting a metalloproteinase inhibition to prevent metalloprotease autodigestion and/or protection against prey proteases. Binds a lipid between the two protein chains in the homodimer. The lipid-bound form promotes histamine relase from mouse mast cells, contrary to the lipid-free form. This chain is Venom nerve growth factor 2, found in Pseudonaja textilis (Eastern brown snake).